The following is a 169-amino-acid chain: ATP synthase subunit b (169 aa).

The helical transmembrane segment at 26–46 (FFFVLLIFLIVLGVIAKWVVP) threads the bilayer.

The protein belongs to the ATPase B chain family. F-type ATPases have 2 components, F(1) - the catalytic core - and F(0) - the membrane proton channel. F(1) has five subunits: alpha(3), beta(3), gamma(1), delta(1), epsilon(1). F(0) has three main subunits: a(1), b(2) and c(10-14). The alpha and beta chains form an alternating ring which encloses part of the gamma chain. F(1) is attached to F(0) by a central stalk formed by the gamma and epsilon chains, while a peripheral stalk is formed by the delta and b chains.

The protein resides in the cell membrane. Its function is as follows. F(1)F(0) ATP synthase produces ATP from ADP in the presence of a proton or sodium gradient. F-type ATPases consist of two structural domains, F(1) containing the extramembraneous catalytic core and F(0) containing the membrane proton channel, linked together by a central stalk and a peripheral stalk. During catalysis, ATP synthesis in the catalytic domain of F(1) is coupled via a rotary mechanism of the central stalk subunits to proton translocation. In terms of biological role, component of the F(0) channel, it forms part of the peripheral stalk, linking F(1) to F(0). This chain is ATP synthase subunit b, found in Mycobacterium sp. (strain JLS).